The chain runs to 347 residues: Integrin beta-1-binding protein 2 (347 aa).

Zn(2+) contacts are provided by Cys5, Cys10, Cys24, and His27. The CHORD 1 domain maps to 5 to 64; that stretch reads CRNKGCGQHFDPNTNLPDSCCHHPGVPIFHDALKGWSCCRKRTVDFSEFLNIKGCTMGPH. Residues 28-31 carry the SH3-binding motif; it reads PGVP. Zn(2+) contacts are provided by Cys42, Cys43, Cys59, and His64. The SH3-binding signature appears at 70–78; that stretch reads PEAPQPEGP. The Zn(2+) site is built by Cys149 and Cys154. The CHORD 2 domain maps to 149 to 208; it reads CQNPGCDAVYQGPESDATPCTYHPGAPRFHEGMKSWSCCGIQTLDFGAFLAQPGCRVGRH. An SH2-binding motif is present at residues 158 to 161; it reads YQGP. The Zn(2+) site is built by Cys168 and His171. Positions 172-175 match the SH3-binding motif; that stretch reads PGAP. Zn(2+) contacts are provided by Cys186, Cys187, Cys203, and His208. The region spanning 215-304 is the CS domain; the sequence is PASCRHDWHQ…ADPGSWAQLE (90 aa). The SH2-binding motif lies at 234–237; the sequence is YGQI. Residues 319–347 form a disordered region; the sequence is LEMDEEESDDSDDDLSWTEEEEEEEAMGE. Residues 320–347 are compositionally biased toward acidic residues; that stretch reads EMDEEESDDSDDDLSWTEEEEEEEAMGE.

Interacts with beta-1 integrin subunit. This interaction is regulated by divalent cations, and it occurs only in absence of calcium. Expressed in skeletal and cardiac muscles but not in other tissues.

Its function is as follows. May play a role during maturation and/or organization of muscles cells. The polypeptide is Integrin beta-1-binding protein 2 (ITGB1BP2) (Homo sapiens (Human)).